Here is a 331-residue protein sequence, read N- to C-terminus: Cathepsin S (331 aa).

The first 16 residues, M1–A16, serve as a signal peptide directing secretion. Positions Q17 to K114 are cleaved as a propeptide — activation peptide. Residue N104 is glycosylated (N-linked (GlcNAc...) asparagine). 4 cysteine pairs are disulfide-bonded: C126–C224, C136–C180, C170–C213, and C272–C320. Residue C139 is part of the active site. Residues H278 and N298 contribute to the active site.

It belongs to the peptidase C1 family.

Its subcellular location is the lysosome. It localises to the secreted. The protein resides in the cytoplasmic vesicle. The protein localises to the phagosome. It catalyses the reaction Similar to cathepsin L, but with much less activity on Z-Phe-Arg-|-NHMec, and more activity on the Z-Val-Val-Arg-|-Xaa compound.. Thiol protease. Key protease responsible for the removal of the invariant chain from MHC class II molecules and MHC class II antigen presentation. The bond-specificity of this proteinase is in part similar to the specificities of cathepsin L. The sequence is that of Cathepsin S (CTSS) from Canis lupus familiaris (Dog).